A 1037-amino-acid polypeptide reads, in one-letter code: Glycine dehydrogenase (decarboxylating) 1, mitochondrial (1037 aa).

A mitochondrion-targeting transit peptide spans 1–67; sequence MERARRLAYR…AFGRHQQTRS (67 aa). At Cys-98 the chain carries S-glutathionyl cysteine; transient. An S-glutathionyl cysteine mark is found at Cys-402 and Cys-463. At Lys-774 the chain carries N6-(pyridoxal phosphate)lysine. S-glutathionyl cysteine; transient occurs at positions 777, 943, and 1022.

The protein belongs to the GcvP family. In terms of assembly, homodimer. The glycine cleavage system is composed of four proteins: P, T, L and H. It depends on pyridoxal 5'-phosphate as a cofactor. Post-translationally, glutathionylated at Cys-98, Cys-777, Cys-943 and Cys-1022 after S-nitrosoglutathione treatment. S-nitrosylated at unknown positions by nitric oxide. Expressed in leaves. Detected in roots, stems, flowers and siliques.

The protein localises to the mitochondrion. The enzyme catalyses N(6)-[(R)-lipoyl]-L-lysyl-[glycine-cleavage complex H protein] + glycine + H(+) = N(6)-[(R)-S(8)-aminomethyldihydrolipoyl]-L-lysyl-[glycine-cleavage complex H protein] + CO2. Inhibited by harpin, S-nitrosoglutathione (GSNO), nitric oxide, N-ethylmaleimide and 5,5'-dithiobis-(2-nitrobenzoic acid). Its function is as follows. The glycine decarboxylase (GDC) or glycine cleavage system catalyzes the degradation of glycine. The P protein binds the alpha-amino group of glycine through its pyridoxal phosphate cofactor; CO(2) is released and the remaining methylamine moiety is then transferred to the lipoamide cofactor of the H protein. This Arabidopsis thaliana (Mouse-ear cress) protein is Glycine dehydrogenase (decarboxylating) 1, mitochondrial (GLDP1).